A 206-amino-acid chain; its full sequence is Pyrrolidone-carboxylate peptidase 2 (206 aa).

Catalysis depends on residues Glu78, Cys141, and His165.

It belongs to the peptidase C15 family. Homotetramer.

The protein resides in the cytoplasm. The enzyme catalyses Release of an N-terminal pyroglutamyl group from a polypeptide, the second amino acid generally not being Pro.. Its function is as follows. Removes 5-oxoproline from various penultimate amino acid residues except L-proline. This is Pyrrolidone-carboxylate peptidase 2 from Caldanaerobacter subterraneus subsp. tengcongensis (strain DSM 15242 / JCM 11007 / NBRC 100824 / MB4) (Thermoanaerobacter tengcongensis).